The following is a 688-amino-acid chain: Amino-acid acetyltransferase, mitochondrial (688 aa).

The transit peptide at 1 to 45 (MSSRALTWPRTAKSSLLKQQTSSFVGQPKLGTPNCRSFSSTADRP) directs the protein to the mitochondrion. 2 disordered regions span residues 1–59 (MSSR…SKSY) and 96–119 (LKAQ…TVTQ). Polar residues-rich tracts occupy residues 12–25 (AKSS…SSFV), 34–57 (NCRS…SSSK), and 106–119 (TEPT…TVTQ). In terms of domain architecture, N-acetyltransferase spans 509–678 (NRPRLSLDDP…YEQVCRSIQP (170 aa)).

Belongs to the acetyltransferase family.

It localises to the mitochondrion. It carries out the reaction L-glutamate + acetyl-CoA = N-acetyl-L-glutamate + CoA + H(+). The protein operates within amino-acid biosynthesis; L-arginine biosynthesis; N(2)-acetyl-L-ornithine from L-glutamate: step 1/4. Functionally, N-acetylglutamate synthase involved in arginine biosynthesis. The sequence is that of Amino-acid acetyltransferase, mitochondrial (arg2) from Aspergillus flavus (strain ATCC 200026 / FGSC A1120 / IAM 13836 / NRRL 3357 / JCM 12722 / SRRC 167).